The primary structure comprises 205 residues: Imidazole glycerol phosphate synthase subunit HisH (205 aa).

In terms of domain architecture, Glutamine amidotransferase type-1 spans 1–205 (MITIVDYQMG…RFATAPVEVA (205 aa)). The active-site Nucleophile is the Cys-79. Active-site residues include His-182 and Glu-184.

As to quaternary structure, heterodimer of HisH and HisF.

It is found in the cytoplasm. The enzyme catalyses 5-[(5-phospho-1-deoxy-D-ribulos-1-ylimino)methylamino]-1-(5-phospho-beta-D-ribosyl)imidazole-4-carboxamide + L-glutamine = D-erythro-1-(imidazol-4-yl)glycerol 3-phosphate + 5-amino-1-(5-phospho-beta-D-ribosyl)imidazole-4-carboxamide + L-glutamate + H(+). It catalyses the reaction L-glutamine + H2O = L-glutamate + NH4(+). Its pathway is amino-acid biosynthesis; L-histidine biosynthesis; L-histidine from 5-phospho-alpha-D-ribose 1-diphosphate: step 5/9. Functionally, IGPS catalyzes the conversion of PRFAR and glutamine to IGP, AICAR and glutamate. The HisH subunit catalyzes the hydrolysis of glutamine to glutamate and ammonia as part of the synthesis of IGP and AICAR. The resulting ammonia molecule is channeled to the active site of HisF. The polypeptide is Imidazole glycerol phosphate synthase subunit HisH (Rhodopirellula baltica (strain DSM 10527 / NCIMB 13988 / SH1)).